Here is a 527-residue protein sequence, read N- to C-terminus: Putative ribose/galactose/methyl galactoside import ATP-binding protein 2 (527 aa).

Residues 1–31 (MFTARVARPMAGDDAPAASSGSTGSSAPPAS) form a disordered region. A compositionally biased stretch (low complexity) spans 12–31 (GDDAPAASSGSTGSSAPPAS). ABC transporter domains are found at residues 38-274 (LEVR…VGRE) and 284-523 (VPIG…RIMD). 70-77 (GENGAGKS) is an ATP binding site.

It belongs to the ABC transporter superfamily. Carbohydrate importer 2 (CUT2) (TC 3.A.1.2) family.

Its subcellular location is the cell inner membrane. The catalysed reaction is D-ribose(out) + ATP + H2O = D-ribose(in) + ADP + phosphate + H(+). The enzyme catalyses D-galactose(out) + ATP + H2O = D-galactose(in) + ADP + phosphate + H(+). Functionally, part of an ABC transporter complex involved in carbohydrate import. Could be involved in ribose, galactose and/or methyl galactoside import. Responsible for energy coupling to the transport system. The sequence is that of Putative ribose/galactose/methyl galactoside import ATP-binding protein 2 from Burkholderia lata (strain ATCC 17760 / DSM 23089 / LMG 22485 / NCIMB 9086 / R18194 / 383).